Here is a 292-residue protein sequence, read N- to C-terminus: Probable ABC transporter phosphonate/phosphite binding protein PhnD2 (292 aa).

The N-terminal stretch at 1 to 20 (MKLKSLLSVFTISIVALTSA) is a signal peptide. Residue C21 is the site of N-palmitoyl cysteine attachment. C21 carries S-diacylglycerol cysteine lipidation.

This sequence belongs to the phosphate/phosphite/phosphonate binding protein family. In terms of assembly, the complex may be composed of two ATP-binding proteins (PhnC2), two transmembrane proteins (PhnE2) and a solute-binding protein (PhnD2).

It localises to the cell membrane. Probably part of the ABC transporter complex PhnC2D2E2. Binds strongly to methylphosphonate (MPn), ethylphosphonate (EPn) and inorganic phosphite. The protein is Probable ABC transporter phosphonate/phosphite binding protein PhnD2 of Prochlorococcus marinus (strain MIT 9301).